A 544-amino-acid chain; its full sequence is pH-responsive protein 2 (544 aa).

A signal peptide spans 1–22; that stretch reads MLLKSLFPSILAATSFVSSVAA. N-linked (GlcNAc...) asparagine glycosylation is found at asparagine 40 and asparagine 59. Cysteine 72 and cysteine 101 are joined by a disulfide. Residue asparagine 147 is glycosylated (N-linked (GlcNAc...) asparagine). 5 cysteine pairs are disulfide-bonded: cysteine 214/cysteine 347, cysteine 232/cysteine 263, cysteine 369/cysteine 420, cysteine 378/cysteine 444, and cysteine 397/cysteine 402. Asparagine 408 carries N-linked (GlcNAc...) asparagine glycosylation. The tract at residues 469–514 is disordered; the sequence is GSSGLGTVSGTVRTDTSQSTSDSGSGSSSSSSSSSSSSSSGSSGSK. Serine 515 is lipidated: GPI-anchor amidated serine. A propeptide spans 516–544 (removed in mature form); sequence AASIVSVNLLTKIATIGISIVVGFGLITM.

It belongs to the glycosyl hydrolase 72 family.

It is found in the cell membrane. In terms of biological role, required for apical cell growth and plays an essential role in morphogenesis. May be integral to the pathogenic ability of the organism. The chain is pH-responsive protein 2 (PHR2) from Candida albicans (strain SC5314 / ATCC MYA-2876) (Yeast).